We begin with the raw amino-acid sequence, 318 residues long: RNA polymerase II transcription factor B subunit 3 (318 aa).

The segment at 13–54 adopts an RING-type zinc-finger fold; sequence CPLCQADRYLNPNMKLLINPECYHKMCESCVDRIFTTGPAQC.

In terms of assembly, one of the nine subunits forming the core-TFIIH basal transcription factor. Also interacts with skp1 and with the mcs2-mcs6 complex.

It localises to the cytoplasm. It is found in the nucleus. In terms of biological role, acts as a component of the general transcription and DNA repair factor IIH (TFIIH or factor B), which is essential for both basal and activated transcription, and is involved in nucleotide excision repair (NER) of damaged DNA. TFIIH has CTD kinase activity and DNA-dependent ATPase activity, and is essential for polymerase II transcription. This is RNA polymerase II transcription factor B subunit 3 (pmh1) from Schizosaccharomyces pombe (strain 972 / ATCC 24843) (Fission yeast).